The primary structure comprises 134 residues: Crustacean hyperglycemic hormones isoform A (134 aa).

An N-terminal signal peptide occupies residues 1 to 24 (MMACRTLCLVVVMVASLGTSGVGG). Position 61 is a pyrrolidone carboxylic acid (Gln61). A D-phenylalanine; in form CHH-A-II modification is found at Phe63. Cystine bridges form between Cys67–Cys103, Cys83–Cys99, and Cys86–Cys112. At Val132 the chain carries Valine amide.

This sequence belongs to the arthropod CHH/MIH/GIH/VIH hormone family. In terms of processing, stereoinversion of L-Phe (form CHH-A-I) to D-Phe (form CHH-A-II). In terms of tissue distribution, produced by the medulla terminalis X-organ in the eyestalks and transported to the sinus gland where they are stored and released. Present also in the ventral nervous system.

It localises to the secreted. CHH is the most abundant hormone in the sinus gland of isopods and decapods which controls the blood sugar level. Has a secretagogue action over the amylase released from the midgut gland. May act as a stress hormone. Its function is as follows. MIH may inhibit Y-organs where molting hormone (ecdysteroid) is secreted and a molting cycle is initiated when MIH secretion diminishes or stops. The sequence is that of Crustacean hyperglycemic hormones isoform A from Homarus americanus (American lobster).